We begin with the raw amino-acid sequence, 629 residues long: uncharacterized protein (629 aa).

Residues 1–11 are compositionally biased toward polar residues; sequence MSDDQQNGKQN. 4 disordered regions span residues 1–24, 62–87, 197–464, and 493–560; these read MSDD…EQDD, SNNN…SNYN, SEES…SSLI, and PTPT…STPD. Over residues 247-264 the composition is skewed to low complexity; sequence PSSSSSSSSLINSPTTSK. Over residues 274 to 288 the composition is skewed to polar residues; that stretch reads PTINPKSLFGLSSTI. The span at 294–430 shows a compositional bias: basic and acidic residues; the sequence is VKTEKEKEKE…DETLNKETPH (137 aa). 2 stretches are compositionally biased toward low complexity: residues 434 to 464 and 493 to 554; these read PHIT…SSLI and PTPT…NNNN.

This is an uncharacterized protein from Dictyostelium discoideum (Social amoeba).